Consider the following 589-residue polypeptide: Bifunctional protein TrpGD (589 aa).

In terms of domain architecture, Glutamine amidotransferase type-1 spans arginine 46 to lysine 241. Glycine 99–glycine 101 serves as a coordination point for L-glutamine. The Nucleophile; for GATase activity role is filled by cysteine 126. L-glutamine-binding positions include glutamine 130 and serine 176–leucine 177. Residues histidine 215 and glutamate 217 each act as for GATase activity in the active site. The segment at alanine 253 to serine 589 is anthranilate phosphoribosyltransferase.

In the C-terminal section; belongs to the anthranilate phosphoribosyltransferase family. As to quaternary structure, heterotetramer consisting of two non-identical subunits: a beta subunit (TrpG) and a large alpha subunit (TrpE).

The catalysed reaction is chorismate + L-glutamine = anthranilate + pyruvate + L-glutamate + H(+). It carries out the reaction N-(5-phospho-beta-D-ribosyl)anthranilate + diphosphate = 5-phospho-alpha-D-ribose 1-diphosphate + anthranilate. It functions in the pathway amino-acid biosynthesis; L-tryptophan biosynthesis; L-tryptophan from chorismate: step 1/5. It participates in amino-acid biosynthesis; L-tryptophan biosynthesis; L-tryptophan from chorismate: step 2/5. In terms of biological role, part of a heterotetrameric complex that catalyzes the two-step biosynthesis of anthranilate, an intermediate in the biosynthesis of L-tryptophan. In the first step, the glutamine-binding beta subunit (TrpG) of anthranilate synthase (AS) provides the glutamine amidotransferase activity which generates ammonia as a substrate that, along with chorismate, is used in the second step, catalyzed by the large alpha subunit of AS (TrpE) to produce anthranilate. In the absence of TrpG, TrpE can synthesize anthranilate directly from chorismate and high concentrations of ammonia. In addition to synthesizing anthranilate, it also catalyzes the second step of the pathway, the transfer of the phosphoribosyl group of 5-phosphorylribose-1-pyrophosphate (PRPP) to anthranilate. This Thermotoga maritima (strain ATCC 43589 / DSM 3109 / JCM 10099 / NBRC 100826 / MSB8) protein is Bifunctional protein TrpGD (trpGD).